The primary structure comprises 193 residues: Cytidylate kinase (193 aa).

Position 12–20 (12–20) interacts with ATP; that stretch reads GLAGSGTTT.

Belongs to the cytidylate kinase family. Type 2 subfamily.

Its subcellular location is the cytoplasm. It carries out the reaction CMP + ATP = CDP + ADP. It catalyses the reaction dCMP + ATP = dCDP + ADP. In Thermococcus kodakarensis (strain ATCC BAA-918 / JCM 12380 / KOD1) (Pyrococcus kodakaraensis (strain KOD1)), this protein is Cytidylate kinase.